The chain runs to 238 residues: Endo-chitosanase (238 aa).

The first 17 residues, 1-17 (MRLSEILTVALVTGATA), serve as a signal peptide directing secretion. A glycan (N-linked (GlcNAc...) asparagine) is linked at Asn-83.

It belongs to the glycosyl hydrolase 75 family.

It localises to the secreted. It carries out the reaction Endohydrolysis of beta-(1-&gt;4)-linkages between D-glucosamine residues in a partly acetylated chitosan.. Chitosanase catalyzing the endo-type cleavage of chitosan, the deacylated form of chitin. Chitosanase may be crucial in the degradation of the deacetylated portion of chitin in the fungal cell wall. Chitoolisaccharides produced by the hydrolysis of partially N-acetylated chitosan are known to have many biological activities, including antibacterial activity, immune-enhancing effects, and elicitor activity. The chitosans with higher degrees of deacetylation were shown to be the better substrates. Chitodimer, chitotrimer, and chitotetramer are the major products but monoacetyl chitodimer, monoacetyl chitotrimer, and monoacetyl chitotetramer are also produced. The sequence is that of Endo-chitosanase (csn) from Aspergillus fumigatus (Neosartorya fumigata).